We begin with the raw amino-acid sequence, 502 residues long: Probable mitochondrial-processing peptidase subunit alpha (502 aa).

It belongs to the peptidase M16 family. Heterodimer of mas2 (alpha) and mas1 (beta) subunits, forming the mitochondrial processing protease (MPP) in which mas2 is involved in substrate recognition and binding and mas1 is the catalytic subunit.

It is found in the mitochondrion matrix. Its function is as follows. Substrate recognition and binding subunit of the essential mitochondrial processing protease (MPP), which cleaves the mitochondrial sequence off newly imported precursors proteins. In Schizosaccharomyces pombe (strain 972 / ATCC 24843) (Fission yeast), this protein is Probable mitochondrial-processing peptidase subunit alpha (mas2).